Consider the following 130-residue polypeptide: Small ribosomal subunit protein uS9 (130 aa).

It belongs to the universal ribosomal protein uS9 family.

This chain is Small ribosomal subunit protein uS9, found in Photorhabdus laumondii subsp. laumondii (strain DSM 15139 / CIP 105565 / TT01) (Photorhabdus luminescens subsp. laumondii).